Here is a 207-residue protein sequence, read N- to C-terminus: Arginine exporter protein ArgO (207 aa).

6 helical membrane passes run 1 to 21 (MLST…PLGP), 42 to 62 (LCAI…SALL), 67 to 87 (LLLQ…GWGA), 111 to 131 (VVAI…DTIV), 150 to 170 (FGAA…AAWF), and 185 to 205 (GFIC…GLLI).

It belongs to the LysE/ArgO transporter (TC 2.A.75) family.

It localises to the cell inner membrane. It catalyses the reaction L-arginine(in) = L-arginine(out). Functionally, involved in the export of arginine. Important to control the intracellular level of arginine and the correct balance between arginine and lysine. The sequence is that of Arginine exporter protein ArgO from Photorhabdus laumondii subsp. laumondii (strain DSM 15139 / CIP 105565 / TT01) (Photorhabdus luminescens subsp. laumondii).